The sequence spans 435 residues: Adenylosuccinate synthetase (435 aa).

GTP is bound by residues 12-18 (GDEGKGK) and 40-42 (GHT). Catalysis depends on aspartate 13, which acts as the Proton acceptor. Aspartate 13 and glycine 40 together coordinate Mg(2+). IMP-binding positions include 13–16 (DEGK), 38–41 (NAGH), threonine 130, arginine 144, glutamine 224, threonine 239, and arginine 301. Histidine 41 serves as the catalytic Proton donor. 297 to 303 (TVSNRKR) lines the substrate pocket. Residues arginine 303, 329–331 (KLD), and 411–413 (SAG) contribute to the GTP site.

This sequence belongs to the adenylosuccinate synthetase family. In terms of assembly, homodimer. The cofactor is Mg(2+).

It is found in the cytoplasm. It carries out the reaction IMP + L-aspartate + GTP = N(6)-(1,2-dicarboxyethyl)-AMP + GDP + phosphate + 2 H(+). It functions in the pathway purine metabolism; AMP biosynthesis via de novo pathway; AMP from IMP: step 1/2. Its function is as follows. Plays an important role in the de novo pathway of purine nucleotide biosynthesis. Catalyzes the first committed step in the biosynthesis of AMP from IMP. In Wolbachia sp. subsp. Brugia malayi (strain TRS), this protein is Adenylosuccinate synthetase.